The primary structure comprises 354 residues: Glutamine synthetase (354 aa).

Residues 22 to 101 (IQAEYVWVDG…VLAETYNSDG (80 aa)) form the GS beta-grasp domain. Residues 108 to 354 (FRHHAAKVME…IIVETTLLNA (247 aa)) enclose the GS catalytic domain.

This sequence belongs to the glutamine synthetase family. In terms of assembly, homooctamer.

The protein resides in the cytoplasm. The enzyme catalyses L-glutamate + NH4(+) + ATP = L-glutamine + ADP + phosphate + H(+). This chain is Glutamine synthetase (GLN1), found in Hebeloma cylindrosporum.